The sequence spans 53 residues: Temporin-SHd (53 aa).

Positions 1–10 (FLGTINLSLC) are cleaved as a signal peptide. Positions 11 to 34 (EQERDADEEKRDEPDESDVEVEKR) are excised as a propeptide. Position 51 is a phenylalanine amide (Phe51).

It localises to the secreted. The protein resides in the target cell membrane. Functionally, non-amphipathic mildly cationic alpha-helical antimicrobial peptide with potent activity against Gram-positive (including methicillin-resistant Staphylococcus aureus (MRSA)) and Gram-negative bacteria, and some fungi, as well as against Trypanosoma and Leishmania (both promastigote and amastigote forms). Strongly and selectively perturbs anionic bilayer membranes by interacting with the polar head groups and acyl region of the phospholipids, with formation of regions of two coexisting phases, one phase rich in peptide and the other lipid-rich. Shows low hemolytic activity (LC(50)=44 uM) and a low toxicity for human monocytes THP-1 and THP-1-derived macrophages. Is not toxic to human hepatoma-derived cells. The polypeptide is Temporin-SHd (Pelophylax saharicus (Sahara frog)).